A 287-amino-acid polypeptide reads, in one-letter code: Elongation factor Ts (287 aa).

An involved in Mg(2+) ion dislocation from EF-Tu region spans residues T80 to L83.

This sequence belongs to the EF-Ts family.

It localises to the cytoplasm. Associates with the EF-Tu.GDP complex and induces the exchange of GDP to GTP. It remains bound to the aminoacyl-tRNA.EF-Tu.GTP complex up to the GTP hydrolysis stage on the ribosome. The protein is Elongation factor Ts of Stutzerimonas stutzeri (strain A1501) (Pseudomonas stutzeri).